The chain runs to 311 residues: Nod factor export ATP-binding protein I (311 aa).

Residues 13–243 (IDLAGVSKSY…QIGCPVIEIY (231 aa)) enclose the ABC transporter domain. 45–52 (GPNGAGKS) contributes to the ATP binding site.

The protein belongs to the ABC transporter superfamily. Lipooligosaccharide exporter (TC 3.A.1.102) family. In terms of assembly, the complex is composed of two ATP-binding proteins (NodI) and two transmembrane proteins (NodJ).

The protein resides in the cell inner membrane. Its function is as follows. Part of the ABC transporter complex NodIJ involved in the export of the nodulation factors (Nod factors), the bacterial signal molecules that induce symbiosis and subsequent nodulation induction. Nod factors are LCO (lipo-chitin oligosaccharide), a modified beta-1,4-linked N-acetylglucosamine oligosaccharide. This subunit is responsible for energy coupling to the transport system. In Rhizobium johnstonii (strain DSM 114642 / LMG 32736 / 3841) (Rhizobium leguminosarum bv. viciae), this protein is Nod factor export ATP-binding protein I.